Here is a 1011-residue protein sequence, read N- to C-terminus: Histone deacetylase 9 (1011 aa).

Ser-22 carries the phosphoserine modification. Residues 23 to 27 (PLDLR) are interaction with CTBP1. 3 disordered regions span residues 110–139 (RQEQEVERHRREQQLPPLRGKDRGRERAVA), 183–249 (TSLD…KDGN), and 262–304 (TESS…EQMV). Positions 136 to 154 (RAVASTEVKQKLQEFLLSK) are interaction with MEF2. The interaction with MAPK10 stretch occupies residues 175-343 (LWYTAAHHTS…LPAVPSQLNA (169 aa)). Over residues 185–199 (LDQSSPPLSGTSPSY) the composition is skewed to polar residues. The span at 208-219 (DAKDDFPLRKTA) shows a compositional bias: basic and acidic residues. The interval 218–261 (TASEPNLKVRSRLKQKVAERRSSPLLRRKDGNVVTSFKKRMFEV) is interaction with ETV6. Residues Ser-220 and Ser-240 each carry the phosphoserine modification. The span at 233–248 (KVAERRSSPLLRRKDG) shows a compositional bias: basic and acidic residues. The segment covering 262–285 (TESSVSSSSPGSGPSSPNNGPTGS) has biased composition (low complexity). Ser-451 carries the phosphoserine modification. The disordered stretch occupies residues 494–536 (QLKQPGSHLEEAEEELQGDQAMQEDRAPSSGNSTRSDSSACVD). The segment covering 522–532 (SSGNSTRSDSS) has biased composition (polar residues). Ser-554 is modified (phosphoserine). A histone deacetylase region spans residues 631-978 (SATGIAYDPL…VNALLGNELE (348 aa)). Residues Cys-646, Cys-648, His-654, and Cys-731 each coordinate Zn(2+). The active site involves His-783.

This sequence belongs to the histone deacetylase family. HD type 2 subfamily. As to quaternary structure, homodimer. Interacts with CTBP1. The phosphorylated form interacts with 14-3-3. Interacts with HDAC1 and HDAC3, and probably with HDAC4 and HDAC5. Interacts with MEF2, MAPK10, ETV6, NCOR1 and BCL6. Interacts with FOXP3 in the absence of T-cell stimulation. Phosphorylated on Ser-220 and Ser-450; which promotes 14-3-3-binding, impairs interaction with MEF2, and antagonizes antimyogenic activity. Phosphorylated on Ser-240; which impairs nuclear accumulation. Isoform 7 is phosphorylated on Tyr-1010. Phosphorylated by the PKC kinases PKN1 and PKN2, impairing nuclear import. In terms of processing, sumoylated. Broadly expressed, with highest levels in brain, heart, muscle and testis. Isoform 3 is present in human bladder carcinoma cells (at protein level).

It is found in the nucleus. The catalysed reaction is N(6)-acetyl-L-lysyl-[histone] + H2O = L-lysyl-[histone] + acetate. With respect to regulation, inhibited by Trichostatin A (TSA) and suberoylanilide hydroxamic acid. Responsible for the deacetylation of lysine residues on the N-terminal part of the core histones (H2A, H2B, H3 and H4). Histone deacetylation gives a tag for epigenetic repression and plays an important role in transcriptional regulation, cell cycle progression and developmental events. Represses MEF2-dependent transcription. In terms of biological role, isoform 3 lacks active site residues and therefore is catalytically inactive. Represses MEF2-dependent transcription by recruiting HDAC1 and/or HDAC3. Seems to inhibit skeletal myogenesis and to be involved in heart development. Protects neurons from apoptosis, both by inhibiting JUN phosphorylation by MAPK10 and by repressing JUN transcription via HDAC1 recruitment to JUN promoter. This is Histone deacetylase 9 (HDAC9) from Homo sapiens (Human).